The following is a 235-amino-acid chain: Uridylate kinase (235 aa).

10-11 contributes to the ATP binding site; the sequence is GS. Residue Gly-45 participates in UMP binding. Residues Gly-46 and Arg-50 each contribute to the ATP site. Residues Asp-67 and 115–121 contribute to the UMP site; that span reads VTPGQTT. The ATP site is built by Thr-141, Tyr-147, and Asp-150.

It belongs to the UMP kinase family. As to quaternary structure, homohexamer.

It localises to the cytoplasm. It catalyses the reaction UMP + ATP = UDP + ADP. The protein operates within pyrimidine metabolism; CTP biosynthesis via de novo pathway; UDP from UMP (UMPK route): step 1/1. With respect to regulation, inhibited by UTP. Functionally, catalyzes the reversible phosphorylation of UMP to UDP. This Methanocorpusculum labreanum (strain ATCC 43576 / DSM 4855 / Z) protein is Uridylate kinase.